Consider the following 279-residue polypeptide: Esterase CG5412 (279 aa).

Catalysis depends on charge relay system residues Ser-133, Asp-191, and His-218. Positions 249–279 are disordered; that stretch reads QSGNASFVDSGAEDDNDAEVAAMTAELDESD.

It belongs to the LovG family.

This Drosophila melanogaster (Fruit fly) protein is Esterase CG5412.